The primary structure comprises 412 residues: Histone-lysine N-methyltransferase SUV39H1 (412 aa).

Residues 1-89 are interaction with SIRT1; the sequence is MAENLKGCSV…LKCIRVLKQF (89 aa). Residues 43 to 101 form the Chromo domain; the sequence is FEVEYLCDYKKIREQEYYLVKWRGYPDSENTWEPRQNLKCIRVLKQFHKDLERELVRRH. The 62-residue stretch at 179–240 folds into the Pre-SET domain; that stretch reads VGCECQDCLL…DCPNRVVQKG (62 aa). The Zn(2+) site is built by cysteine 181, cysteine 183, cysteine 186, cysteine 194, cysteine 195, cysteine 222, cysteine 226, cysteine 228, and cysteine 232. In terms of domain architecture, SET spans 243-366; the sequence is YDLCIFRTND…AGEELTFDYN (124 aa). Position 254 to 256 (254 to 256) interacts with S-adenosyl-L-methionine; the sequence is RGW. Residues 255 to 377 form a mediates interaction with MECOM region; that stretch reads GWGVRTLEKI…QVDPVDMEST (123 aa). Lysine 266 bears the N6-acetyllysine mark. Residues tyrosine 297 and 323-324 each bind S-adenosyl-L-methionine; that span reads NH. Cysteine 326 provides a ligand contact to Zn(2+). Serine 391 is subject to Phosphoserine. Residues 396 to 412 form the Post-SET domain; that stretch reads VRIECKCGTTACRKYLF. Zn(2+)-binding residues include cysteine 400, cysteine 402, and cysteine 407.

The protein belongs to the class V-like SAM-binding methyltransferase superfamily. Histone-lysine methyltransferase family. Suvar3-9 subfamily. In terms of assembly, interacts with CCAR2 and GFI1B. Component of the eNoSC complex, composed of SIRT1, SUV39H1 and RRP8. Interacts with H3 and H4 histones. Interacts with DNMT3B, CBX1, CBX4, MBD1, RUNX1, RUNX3, MYOD1, SMAD5 and RB1. Interacts with SBF1 through the SET domain. Interacts with HDAC1 and HDAC2 through the N-terminus and associates with the core histone deacetylase complex composed of HDAC1, HDAC2, RBBP4 and RBBP7. Interacts (via SET domain) with MECOM; enhances MECOM transcriptional repression activity. Interacts with LMNA; the interaction increases stability of SUV39H1. The large PER complex involved in the histone methylation is composed of at least PER2, CBX3, TRIM28, SUV39H1 and/or SUV39H2; CBX3 mediates the formation of the complex. Post-translationally, phosphorylated on serine residues, and to a lesser degree, on threonine residues. In terms of processing, acetylated at Lys-266, leading to inhibition of enzyme activity. SIRT1-mediated deacetylation relieves this inhibition. Ubiquitinated by the DCX(DCAF13) E3 ubiquitin ligase complex, leading to its degradation. Widely expressed.

It is found in the nucleus. The protein localises to the nucleus lamina. The protein resides in the nucleoplasm. Its subcellular location is the chromosome. It localises to the centromere. The catalysed reaction is L-lysyl(9)-[histone H3] + 3 S-adenosyl-L-methionine = N(6),N(6),N(6)-trimethyl-L-lysyl(9)-[histone H3] + 3 S-adenosyl-L-homocysteine + 3 H(+). With respect to regulation, negatively regulated by CCAR2. Histone methyltransferase that specifically trimethylates 'Lys-9' of histone H3 using monomethylated H3 'Lys-9' as substrate. H3 'Lys-9' trimethylation represents a specific tag for epigenetic transcriptional repression by recruiting HP1 (CBX1, CBX3 and/or CBX5) proteins to methylated histones. Mainly functions in heterochromatin regions, thereby playing a central role in the establishment of constitutive heterochromatin at pericentric and telomere regions. H3 'Lys-9' trimethylation is also required to direct DNA methylation at pericentric repeats. SUV39H1 is targeted to histone H3 via its interaction with RB1 and is involved in many processes, such as repression of MYOD1-stimulated differentiation, regulation of the control switch for exiting the cell cycle and entering differentiation, repression by the PML-RARA fusion protein, BMP-induced repression, repression of switch recombination to IgA and regulation of telomere length. Component of the eNoSC (energy-dependent nucleolar silencing) complex, a complex that mediates silencing of rDNA in response to intracellular energy status and acts by recruiting histone-modifying enzymes. The eNoSC complex is able to sense the energy status of cell: upon glucose starvation, elevation of NAD(+)/NADP(+) ratio activates SIRT1, leading to histone H3 deacetylation followed by dimethylation of H3 at 'Lys-9' (H3K9me2) by SUV39H1 and the formation of silent chromatin in the rDNA locus. Recruited by the PER complex to the E-box elements of the circadian target genes such as PER2 itself or PER1, contributes to the conversion of local chromatin to a heterochromatin-like repressive state through H3 'Lys-9' trimethylation. This is Histone-lysine N-methyltransferase SUV39H1 (Suv39h1) from Mus musculus (Mouse).